The primary structure comprises 348 residues: Protein RecA (348 aa).

An ATP-binding site is contributed by 65–72 (GPESSGKT).

The protein belongs to the RecA family.

It localises to the cytoplasm. Can catalyze the hydrolysis of ATP in the presence of single-stranded DNA, the ATP-dependent uptake of single-stranded DNA by duplex DNA, and the ATP-dependent hybridization of homologous single-stranded DNAs. It interacts with LexA causing its activation and leading to its autocatalytic cleavage. In Enterococcus gallinarum, this protein is Protein RecA.